Consider the following 453-residue polypeptide: tRNA modification GTPase MnmE (453 aa).

Residues Arg22, Glu79, and Lys119 each contribute to the (6S)-5-formyl-5,6,7,8-tetrahydrofolate site. The region spanning 215–376 is the TrmE-type G domain; it reads GMKVVIAGRP…LRQHLKECMG (162 aa). Asn225 contacts K(+). GTP-binding positions include 225-230, 244-250, 269-272, and 334-337; these read NAGKSS, TDIAGTT, DTAG, and NKAD. Residue Ser229 coordinates Mg(2+). K(+)-binding residues include Thr244, Ile246, and Thr249. Thr250 contacts Mg(2+). Lys453 contributes to the (6S)-5-formyl-5,6,7,8-tetrahydrofolate binding site.

This sequence belongs to the TRAFAC class TrmE-Era-EngA-EngB-Septin-like GTPase superfamily. TrmE GTPase family. As to quaternary structure, homodimer. Heterotetramer of two MnmE and two MnmG subunits. K(+) is required as a cofactor.

The protein resides in the cytoplasm. Its function is as follows. Exhibits a very high intrinsic GTPase hydrolysis rate. Involved in the addition of a carboxymethylaminomethyl (cmnm) group at the wobble position (U34) of certain tRNAs, forming tRNA-cmnm(5)s(2)U34. This Vibrio cholerae serotype O1 (strain ATCC 39315 / El Tor Inaba N16961) protein is tRNA modification GTPase MnmE.